The following is a 414-amino-acid chain: Probable aminotransferase TAT2 (414 aa).

The protein belongs to the class-I pyridoxal-phosphate-dependent aminotransferase family. Pyridoxal 5'-phosphate serves as cofactor.

This is Probable aminotransferase TAT2 from Arabidopsis thaliana (Mouse-ear cress).